Reading from the N-terminus, the 457-residue chain is Hepatocyte nuclear factor 3-beta (457 aa).

A transactivation domain 1 region spans residues 14-93 (DWSSYYAEPE…AGAMAGMGGS (80 aa)). The short motif at 106 to 113 (LSPSLSPL) is the Nuclear localization signal element. T156 is subject to Phosphothreonine. Positions 159–252 (KPPYSYISLI…FENGCYLRRQ (94 aa)) form a DNA-binding region, fork-head. 2 positions are modified to phosphoserine: S212 and S283. The segment covering 280–292 (AQASQAQLGEAAG) has biased composition (low complexity). The segment at 280–365 (AQASQAQLGE…PGLPPEAHLK (86 aa)) is disordered. A compositionally biased stretch (polar residues) spans 298 to 310 (PAGTESPHSSASP). T301 bears the Phosphothreonine mark. Phosphoserine is present on residues S303, S306, S307, and S309. Residues 339-352 (PGQQQQAAAHLLGP) show a composition bias toward low complexity. The segment at 361–457 (EAHLKPEHHY…VYSRPIMNSS (97 aa)) is transactivation domain 2. Residues S436 and S457 each carry the phosphoserine modification.

Binds DNA as a monomer. Binds TLE1. Interacts with FOXA1 and FOXA3. Interacts with PRKDC. Interacts with AKT1. Interacts with TET1; this interaction may recruit TET1 to specific genomic loci to mediate their demethylation. Post-translationally, phosphorylation on Thr-156 abolishes binding to target promoters and subsequent transcription activation upon insulin stimulation.

Its subcellular location is the nucleus. The protein localises to the cytoplasm. Its function is as follows. Transcription factor that is involved in embryonic development, establishment of tissue-specific gene expression and regulation of gene expression in differentiated tissues. Is thought to act as a 'pioneer' factor opening the compacted chromatin for other proteins through interactions with nucleosomal core histones and thereby replacing linker histones at target enhancer and/or promoter sites. Binds DNA with the consensus sequence 5'-[AC]A[AT]T[AG]TT[GT][AG][CT]T[CT]-3'. In embryonic development is required for notochord formation. Involved in the development of multiple endoderm-derived organ systems such as the liver, pancreas and lungs; FOXA1 and FOXA2 seem to have at least in part redundant roles. Originally described as a transcription activator for a number of liver genes such as AFP, albumin, tyrosine aminotransferase, PEPCK, etc. Interacts with the cis-acting regulatory regions of these genes. Involved in glucose homeostasis; regulates the expression of genes important for glucose sensing in pancreatic beta-cells and glucose homeostasis. Involved in regulation of fat metabolism. Binds to fibrinogen beta promoter and is involved in IL6-induced fibrinogen beta transcriptional activation. The sequence is that of Hepatocyte nuclear factor 3-beta (FOXA2) from Homo sapiens (Human).